The sequence spans 241 residues: Uridylate kinase (241 aa).

Residue 15 to 18 participates in ATP binding; it reads KLSG. Positions 23–28 are involved in allosteric activation by GTP; that stretch reads GAEGFG. UMP is bound at residue Gly57. Gly58 and Arg62 together coordinate ATP. UMP is bound by residues Asp77 and 138–145; that span reads TGNPFFTT. ATP-binding residues include Thr165, Phe171, and Asp174.

Belongs to the UMP kinase family. As to quaternary structure, homohexamer.

It is found in the cytoplasm. It catalyses the reaction UMP + ATP = UDP + ADP. It functions in the pathway pyrimidine metabolism; CTP biosynthesis via de novo pathway; UDP from UMP (UMPK route): step 1/1. With respect to regulation, allosterically activated by GTP. Inhibited by UTP. Functionally, catalyzes the reversible phosphorylation of UMP to UDP. The protein is Uridylate kinase of Sodalis glossinidius (strain morsitans).